Reading from the N-terminus, the 392-residue chain is Stilbene synthase 6 (392 aa).

55 to 58 is a substrate binding site; that stretch reads KFNR. Residue Cys164 is part of the active site. Substrate contacts are provided by residues Leu267 and 305–307; that span reads GGP.

This sequence belongs to the thiolase-like superfamily. Chalcone/stilbene synthases family. In terms of assembly, homodimer.

The protein localises to the cytoplasm. It catalyses the reaction 4-coumaroyl-CoA + 3 malonyl-CoA + 3 H(+) = trans-resveratrol + 4 CO2 + 4 CoA. It functions in the pathway phytoalexin biosynthesis; 3,4',5-trihydroxystilbene biosynthesis; 3,4',5-trihydroxystilbene from trans-4-coumarate: step 2/2. Functionally, mediates resistance to pathogens which are sensitive to stilbenes. The sequence is that of Stilbene synthase 6 (STS) from Vitis vinifera (Grape).